A 272-amino-acid chain; its full sequence is Phosphatidylglycerol--prolipoprotein diacylglyceryl transferase (272 aa).

4 helical membrane-spanning segments follow: residues 24–44 (WYAL…RHLV), 64–84 (LLVY…VVFY), 99–119 (LWQG…GVML), and 125–145 (GLPT…GLFL). Arginine 147 lines the a 1,2-diacyl-sn-glycero-3-phospho-(1'-sn-glycerol) pocket. Helical transmembrane passes span 185-205 (AAAE…LGAL), 209-229 (GLVT…CEFF), and 245-265 (MGML…AFAY).

Belongs to the Lgt family.

The protein resides in the cell inner membrane. The enzyme catalyses L-cysteinyl-[prolipoprotein] + a 1,2-diacyl-sn-glycero-3-phospho-(1'-sn-glycerol) = an S-1,2-diacyl-sn-glyceryl-L-cysteinyl-[prolipoprotein] + sn-glycerol 1-phosphate + H(+). Its pathway is protein modification; lipoprotein biosynthesis (diacylglyceryl transfer). Its function is as follows. Catalyzes the transfer of the diacylglyceryl group from phosphatidylglycerol to the sulfhydryl group of the N-terminal cysteine of a prolipoprotein, the first step in the formation of mature lipoproteins. The chain is Phosphatidylglycerol--prolipoprotein diacylglyceryl transferase from Methylocella silvestris (strain DSM 15510 / CIP 108128 / LMG 27833 / NCIMB 13906 / BL2).